A 673-amino-acid polypeptide reads, in one-letter code: Annexin A6 (673 aa).

Residue alanine 2 is modified to N-acetylalanine. At serine 13 the chain carries Phosphoserine. Annexin repeat units follow at residues 20 to 91 (FDPN…GLMR), 92 to 163 (PPAY…VLLQ), 175 to 247 (DLVQ…AVVK), 251 to 322 (STPE…KLSG), 363 to 434 (FNPD…GLMM), 435 to 506 (PPAH…SLAT), 521 to 595 (EDAQ…AIVQ), and 599 to 670 (NKPL…ALCG). Residue tyrosine 30 is modified to Phosphotyrosine. Residues lysine 63, lysine 68, lysine 75, and lysine 81 each carry the N6-acetyllysine modification. Tyrosine 201 carries the post-translational modification Phosphotyrosine. 3 positions are modified to N6-acetyllysine: lysine 306, lysine 370, and lysine 418. Serine 422 carries the post-translational modification Phosphoserine. N6-acetyllysine is present on lysine 483. Serine 537 carries the post-translational modification Phosphoserine. Lysine 620 carries the N6-acetyllysine modification.

Belongs to the annexin family. Post-translationally, phosphorylated in response to growth factor stimulation.

It is found in the cytoplasm. The protein resides in the melanosome. Its function is as follows. May associate with CD21. May regulate the release of Ca(2+) from intracellular stores. This chain is Annexin A6 (ANXA6), found in Homo sapiens (Human).